The sequence spans 239 residues: 2,3,4,5-tetrahydropyridine-2,6-dicarboxylate N-acetyltransferase (239 aa).

The protein belongs to the transferase hexapeptide repeat family. DapH subfamily.

It carries out the reaction (S)-2,3,4,5-tetrahydrodipicolinate + acetyl-CoA + H2O = L-2-acetamido-6-oxoheptanedioate + CoA. Its pathway is amino-acid biosynthesis; L-lysine biosynthesis via DAP pathway; LL-2,6-diaminopimelate from (S)-tetrahydrodipicolinate (acetylase route): step 1/3. In terms of biological role, catalyzes the transfer of an acetyl group from acetyl-CoA to tetrahydrodipicolinate. The polypeptide is 2,3,4,5-tetrahydropyridine-2,6-dicarboxylate N-acetyltransferase (Staphylococcus aureus (strain Newman)).